The sequence spans 294 residues: NAD kinase (294 aa).

Aspartate 74 serves as the catalytic Proton acceptor. Residues 74 to 75, 148 to 149, histidine 159, arginine 176, aspartate 178, 189 to 194, and glutamine 249 each bind NAD(+); these read DG, NE, and TAYSLS.

Belongs to the NAD kinase family. A divalent metal cation is required as a cofactor.

The protein localises to the cytoplasm. It catalyses the reaction NAD(+) + ATP = ADP + NADP(+) + H(+). In terms of biological role, involved in the regulation of the intracellular balance of NAD and NADP, and is a key enzyme in the biosynthesis of NADP. Catalyzes specifically the phosphorylation on 2'-hydroxyl of the adenosine moiety of NAD to yield NADP. The protein is NAD kinase of Vibrio vulnificus (strain YJ016).